The chain runs to 352 residues: tRNA pseudouridine synthase D (352 aa).

Asp-81 functions as the Nucleophile in the catalytic mechanism. The TRUD domain occupies 157–303 (GVPNYFGLQR…MLHERRILRL (147 aa)).

It belongs to the pseudouridine synthase TruD family.

It carries out the reaction uridine(13) in tRNA = pseudouridine(13) in tRNA. Responsible for synthesis of pseudouridine from uracil-13 in transfer RNAs. The sequence is that of tRNA pseudouridine synthase D from Azotobacter vinelandii (strain DJ / ATCC BAA-1303).